The chain runs to 368 residues: Phosphate acyltransferase (368 aa).

Belongs to the PlsX family. As to quaternary structure, homodimer. Probably interacts with PlsY.

It localises to the cytoplasm. It catalyses the reaction a fatty acyl-[ACP] + phosphate = an acyl phosphate + holo-[ACP]. Its pathway is lipid metabolism; phospholipid metabolism. Catalyzes the reversible formation of acyl-phosphate (acyl-PO(4)) from acyl-[acyl-carrier-protein] (acyl-ACP). This enzyme utilizes acyl-ACP as fatty acyl donor, but not acyl-CoA. The polypeptide is Phosphate acyltransferase (Herpetosiphon aurantiacus (strain ATCC 23779 / DSM 785 / 114-95)).